The primary structure comprises 430 residues: Dihydrolipoyllysine-residue acetyltransferase component of pyruvate dehydrogenase complex (430 aa).

The Lipoyl-binding domain maps to 2–77 (AFEFRLPDIG…VVGDVIVKID (76 aa)). Lysine 43 is modified (N6-lipoyllysine). A disordered region spans residues 80 to 122 (DAEDMQFKGHDDDSSSKEEPAKEEAPAEQAPVATQTEEVDENR). Basic and acidic residues predominate over residues 84–104 (MQFKGHDDDSSSKEEPAKEEA). The 38-residue stretch at 125–162 (KAMPSVRKYAREKGVNIKAVSGSGKNGRITKEDVDAYL) folds into the Peripheral subunit-binding (PSBD) domain. The segment at 165–200 (GAPTASNESAASATSEEVAETPAAPAAVTLEGDFPE) is disordered. Positions 166–193 (APTASNESAASATSEEVAETPAAPAAVT) are enriched in low complexity. The active site involves histidine 401.

Belongs to the 2-oxoacid dehydrogenase family. Forms a 24-polypeptide structural core with octahedral symmetry. It depends on (R)-lipoate as a cofactor.

The enzyme catalyses N(6)-[(R)-dihydrolipoyl]-L-lysyl-[protein] + acetyl-CoA = N(6)-[(R)-S(8)-acetyldihydrolipoyl]-L-lysyl-[protein] + CoA. The pyruvate dehydrogenase complex catalyzes the overall conversion of pyruvate to acetyl-CoA and CO(2). It contains multiple copies of three enzymatic components: pyruvate dehydrogenase (E1), dihydrolipoamide acetyltransferase (E2) and lipoamide dehydrogenase (E3). The polypeptide is Dihydrolipoyllysine-residue acetyltransferase component of pyruvate dehydrogenase complex (pdhC) (Staphylococcus aureus (strain COL)).